A 302-amino-acid chain; its full sequence is UDP-N-acetylenolpyruvoylglucosamine reductase (302 aa).

Residues 27–192 (KVGGAVDYLA…LSAKFALRPG (166 aa)) enclose the FAD-binding PCMH-type domain. The active site involves Arg171. The Proton donor role is filled by Ser221. Glu291 is a catalytic residue.

This sequence belongs to the MurB family. Requires FAD as cofactor.

The protein resides in the cytoplasm. It carries out the reaction UDP-N-acetyl-alpha-D-muramate + NADP(+) = UDP-N-acetyl-3-O-(1-carboxyvinyl)-alpha-D-glucosamine + NADPH + H(+). The protein operates within cell wall biogenesis; peptidoglycan biosynthesis. In terms of biological role, cell wall formation. In Streptococcus suis (strain 98HAH33), this protein is UDP-N-acetylenolpyruvoylglucosamine reductase.